Consider the following 640-residue polypeptide: Probable potassium transport system protein Kup 3 (640 aa).

Residues 1–15 (MTVDAAATPAEAPAT) show a composition bias toward low complexity. The tract at residues 1–20 (MTVDAAATPAEAPATNGHGD) is disordered. 12 helical membrane-spanning segments follow: residues 30–50 (LTLG…LYAL), 71–91 (VISL…VVIL), 117–137 (ASII…DAVI), 155–175 (AAFD…LFAV), 183–203 (VAAF…IAAF), 224–244 (FMLH…LAVT), 265–285 (WLFV…ALII), 294–314 (PFFL…ATVA), 363–383 (LLLA…ALAS), 385–405 (YGIS…VVIW), 410–430 (WSPL…LTFL), and 437–457 (VLEG…LMYT).

The protein belongs to the HAK/KUP transporter (TC 2.A.72) family.

It localises to the cell inner membrane. It carries out the reaction K(+)(in) + H(+)(in) = K(+)(out) + H(+)(out). Transport of potassium into the cell. Likely operates as a K(+):H(+) symporter. In Bradyrhizobium sp. (strain BTAi1 / ATCC BAA-1182), this protein is Probable potassium transport system protein Kup 3.